A 321-amino-acid polypeptide reads, in one-letter code: Bifunctional ligase/repressor BirA (321 aa).

Positions 22 to 41 (GEQLGETLGMSRAAINKHIQ) form a DNA-binding region, H-T-H motif. A BPL/LPL catalytic domain is found at 67–254 (LNAKQILGQL…ELRAALELFE (188 aa)). Biotin is bound by residues 89-91 (STN), Gln-112, 116-118 (RGR), and Lys-183.

Belongs to the biotin--protein ligase family. Monomer in solution. Interacts with BCCP. Homodimerizes to bind DNA. Interaction with the corepressor bio-5'-AMP increases dimerization.

It catalyses the reaction biotin + L-lysyl-[protein] + ATP = N(6)-biotinyl-L-lysyl-[protein] + AMP + diphosphate + H(+). The switch between the enzymatic activity and the repressor activity is regulated by cellular demand for biotin. The switch occurs by swapping of protein interaction partners by holoBirA. In conditions of high biotin demand, holoBirA associates with apoBCCP to transfer biotin. In conditions of low biotin demand, holoBirA dimerizes, binds DNA and represses transcription of the biotin operon. Acts both as a biotin--[acetyl-CoA-carboxylase] ligase and a biotin-operon repressor. In the presence of ATP, BirA activates biotin to form the BirA-biotinyl-5'-adenylate (BirA-bio-5'-AMP or holoBirA) complex. HoloBirA can either transfer the biotinyl moiety to the biotin carboxyl carrier protein (BCCP) subunit of acetyl-CoA carboxylase, or bind to the biotin operator site and inhibit transcription of the operon. The sequence is that of Bifunctional ligase/repressor BirA from Escherichia coli (strain K12).